Reading from the N-terminus, the 143-residue chain is Sirohydrochlorin cobaltochelatase (143 aa).

Catalysis depends on His9, which acts as the Proton acceptor. His9 is a Co(2+) binding site. Residue His9 coordinates Ni(2+). Substrate contacts are provided by residues Glu45 and 70–75 (LAHGNH). Position 75 (His75) interacts with Co(2+). His75 lines the Ni(2+) pocket.

Belongs to the CbiX family. CbiXS subfamily. In terms of assembly, homotetramer; dimer of dimers.

The enzyme catalyses Co-sirohydrochlorin + 2 H(+) = sirohydrochlorin + Co(2+). It carries out the reaction Ni-sirohydrochlorin + 2 H(+) = sirohydrochlorin + Ni(2+). It participates in cofactor biosynthesis; adenosylcobalamin biosynthesis; cob(II)yrinate a,c-diamide from sirohydrochlorin (anaerobic route): step 1/10. In terms of biological role, catalyzes the insertion of Co(2+) into sirohydrochlorin as part of the anaerobic pathway to cobalamin biosynthesis. Involved in the biosynthesis of the unique nickel-containing tetrapyrrole coenzyme F430, the prosthetic group of methyl-coenzyme M reductase (MCR), which plays a key role in methanogenesis and anaerobic methane oxidation. Catalyzes the insertion of Ni(2+) into sirohydrochlorin to yield Ni-sirohydrochlorin. This is Sirohydrochlorin cobaltochelatase from Methanococcus aeolicus (strain ATCC BAA-1280 / DSM 17508 / OCM 812 / Nankai-3).